The following is a 415-amino-acid chain: Prostacyclin receptor (415 aa).

Residues 1–21 (MMASDGHPGPPSVTPGSPLSA) are disordered. Residues 1–44 (MMASDGHPGPPSVTPGSPLSAGGREWQGMAGSCWNITYVQDSVG) lie on the Extracellular side of the membrane. Cystine bridges form between C33–C193 and C120–C198. Residue N35 is glycosylated (N-linked (GlcNAc...) asparagine). Residues 45–66 (PATSTLMFVAGVVGNGLALGIL) form a helical membrane-spanning segment. The Cytoplasmic segment spans residues 67–79 (GARRRSHPSAFAV). Residues 80-104 (LVTGLAVTDLLGTCFLSPAVFVAYA) form a helical membrane-spanning segment. Over 105–122 (RNSSLLGLAHGGTMLCDT) the chain is Extracellular. Residues 123–143 (FAFAMTFFGLASTLILFAMAV) traverse the membrane as a helical segment. Over 144-162 (ERCLALSHPYLYAQLDGPR) the chain is Cytoplasmic. The helical transmembrane segment at 163-186 (CARFALPSIYAFCCLFCSLPLLGL) threads the bilayer. Residues 187 to 215 (GEHQQYCPGSWCFIRMRSAQPGGCAFSLA) lie on the Extracellular side of the membrane. The chain crosses the membrane as a helical span at residues 216–236 (YASLMALLVTSIFFCNGSVTL). Topologically, residues 237-263 (SLYHMYRQQRRHHGSFVPTSRAREDEV) are cytoplasmic. The helical transmembrane segment at 264-288 (YHLILLALMTVIMAVCSLPLMIRGF) threads the bilayer. The Extracellular portion of the chain corresponds to 289–301 (TQAIAPDSREMGD). The helical transmembrane segment at 302 to 322 (LLAFRFNAFNPILDPWVFILF) threads the bilayer. The Cytoplasmic portion of the chain corresponds to 323-415 (RKAVFQRLKF…SEAIAACSLC (93 aa)). The segment at 349-370 (PLSRPASGRRDPPAPTSLQAKE) is disordered. S365 is subject to Phosphoserine. C412 is modified (cysteine methyl ester). A lipid anchor (S-farnesyl cysteine) is attached at C412. A propeptide spans 413 to 415 (SLC) (removed in mature form).

Belongs to the G-protein coupled receptor 1 family. In terms of assembly, interacts (non-isoprenylated C-terminus) with PDZK1. In terms of processing, isoprenylation does not influence ligand binding but is required for efficient coupling to the effectors adenylyl cyclase and phospholipase C.

The protein localises to the cell membrane. Receptor for prostacyclin (prostaglandin I2 or PGI2). The activity of this receptor is mediated by G(s) proteins which activate adenylate cyclase. The protein is Prostacyclin receptor (Ptgir) of Mus musculus (Mouse).